We begin with the raw amino-acid sequence, 241 residues long: Triosephosphate isomerase (241 aa).

N9–K11 serves as a coordination point for substrate. The active-site Electrophile is the H96. E165 acts as the Proton acceptor in catalysis. Residues G171, S204, and G225–G226 contribute to the substrate site.

It belongs to the triosephosphate isomerase family. As to quaternary structure, homodimer.

Its subcellular location is the cytoplasm. It catalyses the reaction D-glyceraldehyde 3-phosphate = dihydroxyacetone phosphate. It functions in the pathway carbohydrate biosynthesis; gluconeogenesis. It participates in carbohydrate degradation; glycolysis; D-glyceraldehyde 3-phosphate from glycerone phosphate: step 1/1. Its function is as follows. Involved in the gluconeogenesis. Catalyzes stereospecifically the conversion of dihydroxyacetone phosphate (DHAP) to D-glyceraldehyde-3-phosphate (G3P). The chain is Triosephosphate isomerase from Prochlorococcus marinus (strain MIT 9515).